The primary structure comprises 515 residues: Methionine--tRNA ligase (515 aa).

The short motif at A13 to H23 is the 'HIGH' region element. Residues K300–S304 carry the 'KMSKS' region motif. K303 lines the ATP pocket.

Belongs to the class-I aminoacyl-tRNA synthetase family. MetG type 2B subfamily. In terms of assembly, monomer.

The protein localises to the cytoplasm. It carries out the reaction tRNA(Met) + L-methionine + ATP = L-methionyl-tRNA(Met) + AMP + diphosphate. In terms of biological role, is required not only for elongation of protein synthesis but also for the initiation of all mRNA translation through initiator tRNA(fMet) aminoacylation. In Brucella melitensis biotype 1 (strain ATCC 23456 / CCUG 17765 / NCTC 10094 / 16M), this protein is Methionine--tRNA ligase.